Here is a 233-residue protein sequence, read N- to C-terminus: Orotidine 5'-phosphate decarboxylase (233 aa).

Substrate contacts are provided by residues aspartate 11, lysine 34, 61–70 (DLKLHDIPNT), threonine 117, arginine 179, glutamine 188, glycine 208, and arginine 209. Catalysis depends on lysine 63, which acts as the Proton donor.

This sequence belongs to the OMP decarboxylase family. Type 1 subfamily. Homodimer.

It catalyses the reaction orotidine 5'-phosphate + H(+) = UMP + CO2. It participates in pyrimidine metabolism; UMP biosynthesis via de novo pathway; UMP from orotate: step 2/2. Functionally, catalyzes the decarboxylation of orotidine 5'-monophosphate (OMP) to uridine 5'-monophosphate (UMP). This chain is Orotidine 5'-phosphate decarboxylase, found in Streptococcus pneumoniae serotype 4 (strain ATCC BAA-334 / TIGR4).